We begin with the raw amino-acid sequence, 226 residues long: Enolase-phosphatase E1 (226 aa).

This sequence belongs to the HAD-like hydrolase superfamily. MasA/MtnC family. Monomer. The cofactor is Mg(2+).

It carries out the reaction 5-methylsulfanyl-2,3-dioxopentyl phosphate + H2O = 1,2-dihydroxy-5-(methylsulfanyl)pent-1-en-3-one + phosphate. It functions in the pathway amino-acid biosynthesis; L-methionine biosynthesis via salvage pathway; L-methionine from S-methyl-5-thio-alpha-D-ribose 1-phosphate: step 3/6. The protein operates within amino-acid biosynthesis; L-methionine biosynthesis via salvage pathway; L-methionine from S-methyl-5-thio-alpha-D-ribose 1-phosphate: step 4/6. Functionally, bifunctional enzyme that catalyzes the enolization of 2,3-diketo-5-methylthiopentyl-1-phosphate (DK-MTP-1-P) into the intermediate 2-hydroxy-3-keto-5-methylthiopentenyl-1-phosphate (HK-MTPenyl-1-P), which is then dephosphorylated to form the acireductone 1,2-dihydroxy-3-keto-5-methylthiopentene (DHK-MTPene). The chain is Enolase-phosphatase E1 from Shewanella baltica (strain OS223).